The following is a 223-amino-acid chain: UPF0441 protein YgiB (223 aa).

Low complexity predominate over residues 178 to 195; that stretch reads TVPKTAMAPKPATTTTVT. The disordered stretch occupies residues 178-223; it reads TVPKTAMAPKPATTTTVTRGGFGESIAKQSTMQRSATGTSSRSMGG. Polar residues predominate over residues 204-223; the sequence is AKQSTMQRSATGTSSRSMGG.

Belongs to the UPF0441 family.

This Shigella boydii serotype 4 (strain Sb227) protein is UPF0441 protein YgiB.